Consider the following 697-residue polypeptide: Elongation factor G (697 aa).

Residues 10 to 290 (THFRNIGIAA…AVVDYLPSPL (281 aa)) enclose the tr-type G domain. Residues 19 to 26 (AHIDAGKT), 89 to 93 (DTPGH), and 143 to 146 (NKMD) each bind GTP.

This sequence belongs to the TRAFAC class translation factor GTPase superfamily. Classic translation factor GTPase family. EF-G/EF-2 subfamily.

It is found in the cytoplasm. Functionally, catalyzes the GTP-dependent ribosomal translocation step during translation elongation. During this step, the ribosome changes from the pre-translocational (PRE) to the post-translocational (POST) state as the newly formed A-site-bound peptidyl-tRNA and P-site-bound deacylated tRNA move to the P and E sites, respectively. Catalyzes the coordinated movement of the two tRNA molecules, the mRNA and conformational changes in the ribosome. This chain is Elongation factor G, found in Deinococcus deserti (strain DSM 17065 / CIP 109153 / LMG 22923 / VCD115).